The following is a 241-amino-acid chain: Translation initiation factor IF-3 (241 aa).

The segment at lysine 178–alanine 241 is disordered. Basic and acidic residues predominate over residues threonine 180 to alanine 197. Acidic residues predominate over residues alanine 208–glutamate 229. The span at alanine 230–alanine 241 shows a compositional bias: low complexity.

The protein belongs to the IF-3 family. In terms of assembly, monomer.

It localises to the cytoplasm. In terms of biological role, IF-3 binds to the 30S ribosomal subunit and shifts the equilibrium between 70S ribosomes and their 50S and 30S subunits in favor of the free subunits, thus enhancing the availability of 30S subunits on which protein synthesis initiation begins. In Streptomyces avermitilis (strain ATCC 31267 / DSM 46492 / JCM 5070 / NBRC 14893 / NCIMB 12804 / NRRL 8165 / MA-4680), this protein is Translation initiation factor IF-3.